Reading from the N-terminus, the 412-residue chain is BSD domain-containing protein 1 (412 aa).

In terms of domain architecture, BSD spans 146–198 (WLAYWDPEHRKAEISELLVTSPSIRALYTKMVPAAVSHSEFWQRYFYKVHQLE). Basic and acidic residues-rich tracts occupy residues 208–219 (KQRADQSVHSEE) and 255–271 (HVED…RDHT). 2 disordered regions span residues 208-228 (KQRA…EEED) and 255-383 (HVED…EKDF). Residues 272–287 (SITSPSESSESISPIT) show a composition bias toward low complexity. Positions 340–351 (THREDPPSDLRV) are enriched in basic and acidic residues. Polar residues predominate over residues 355-374 (NSDSGKSTPSNNGQKGSSTD).

The protein is BSD domain-containing protein 1 (bsdc1) of Xenopus tropicalis (Western clawed frog).